A 331-amino-acid polypeptide reads, in one-letter code: Protein C10 (331 aa).

It belongs to the poxviridae C4/C10 protein family.

This Vaccinia virus (strain Western Reserve) (VACV) protein is Protein C10.